The following is a 108-amino-acid chain: Protein FATTY ACID EXPORT 7 (108 aa).

Transmembrane regions (helical) follow at residues 32–52 (ISLV…TELP), 55–75 (PVLA…MMGS), and 85–105 (PAGL…HGLI).

It belongs to the TMEM14 family.

The protein localises to the membrane. Its function is as follows. May be involved in free fatty acids export. The sequence is that of Protein FATTY ACID EXPORT 7 from Arabidopsis thaliana (Mouse-ear cress).